The chain runs to 166 residues: Small ribosomal subunit protein uS3m (166 aa).

Residues 1 to 25 (MLRSLQHVESHINQCRRISTTSTLL) constitute a mitochondrion transit peptide.

The protein belongs to the universal ribosomal protein uS3 family. In terms of assembly, component of the mitochondrial ribosome small subunit (28S) which comprises a 12S rRNA and about 30 distinct proteins.

Its subcellular location is the mitochondrion. This is Small ribosomal subunit protein uS3m (mrps-24) from Caenorhabditis briggsae.